The sequence spans 73 residues: DNA-directed RNA polymerase subunit omega (73 aa).

It belongs to the RNA polymerase subunit omega family. In terms of assembly, the RNAP catalytic core consists of 2 alpha, 1 beta, 1 beta' and 1 omega subunit. When a sigma factor is associated with the core the holoenzyme is formed, which can initiate transcription.

It carries out the reaction RNA(n) + a ribonucleoside 5'-triphosphate = RNA(n+1) + diphosphate. Functionally, promotes RNA polymerase assembly. Latches the N- and C-terminal regions of the beta' subunit thereby facilitating its interaction with the beta and alpha subunits. The sequence is that of DNA-directed RNA polymerase subunit omega from Lactobacillus delbrueckii subsp. bulgaricus (strain ATCC BAA-365 / Lb-18).